Reading from the N-terminus, the 394-residue chain is Mitogen-activated protein kinase homolog D5 (394 aa).

The Protein kinase domain occupies 62–347 (RPPIMPIGKG…VENALAHPYL (286 aa)). Residues 68 to 76 (IGKGAYGIV) and K91 contribute to the ATP site. D188 functions as the Proton acceptor in the catalytic mechanism. Phosphothreonine is present on T220. The short motif at 220–222 (TEY) is the TXY element. The residue at position 222 (Y222) is a Phosphotyrosine.

It belongs to the protein kinase superfamily. CMGC Ser/Thr protein kinase family. MAP kinase subfamily. Mg(2+) is required as a cofactor. Post-translationally, dually phosphorylated on Thr-220 and Tyr-222, which activates the enzyme. As to expression, leaves, roots, root apices, and dormant and growing axillary buds.

It catalyses the reaction L-seryl-[protein] + ATP = O-phospho-L-seryl-[protein] + ADP + H(+). It carries out the reaction L-threonyl-[protein] + ATP = O-phospho-L-threonyl-[protein] + ADP + H(+). Its activity is regulated as follows. Activated by tyrosine and threonine phosphorylation. The protein is Mitogen-activated protein kinase homolog D5 of Pisum sativum (Garden pea).